The primary structure comprises 212 residues: Protein-L-isoaspartate O-methyltransferase (212 aa).

The active site involves Ser-60.

It belongs to the methyltransferase superfamily. L-isoaspartyl/D-aspartyl protein methyltransferase family.

Its subcellular location is the cytoplasm. It catalyses the reaction [protein]-L-isoaspartate + S-adenosyl-L-methionine = [protein]-L-isoaspartate alpha-methyl ester + S-adenosyl-L-homocysteine. Functionally, catalyzes the methyl esterification of L-isoaspartyl residues in peptides and proteins that result from spontaneous decomposition of normal L-aspartyl and L-asparaginyl residues. It plays a role in the repair and/or degradation of damaged proteins. In Methanococcus maripaludis (strain C7 / ATCC BAA-1331), this protein is Protein-L-isoaspartate O-methyltransferase.